The sequence spans 206 residues: Superoxide dismutase [Mn] (206 aa).

4 residues coordinate Mn(2+): His-27, His-82, Asp-168, and His-172.

Belongs to the iron/manganese superoxide dismutase family. As to quaternary structure, homodimer. The cofactor is Mn(2+).

The catalysed reaction is 2 superoxide + 2 H(+) = H2O2 + O2. Its function is as follows. Destroys superoxide anion radicals which are normally produced within the cells and which are toxic to biological systems. The polypeptide is Superoxide dismutase [Mn] (sodA) (Escherichia coli O157:H7).